A 145-amino-acid chain; its full sequence is Antiholin-like protein LrgA (145 aa).

A run of 4 helical transmembrane segments spans residues 10–30 (PAHF…SKII), 33–53 (FMPI…VLLC), 72–92 (NIGL…GVIS), and 96–116 (FLII…TGYV).

It belongs to the CidA/LrgA family. LrgA subfamily.

It is found in the cell membrane. In terms of biological role, inhibits the expression or activity of extracellular murein hydrolases by interacting, possibly with LrgB, with the holin-like proteins CidA and/or CidB. The LrgAB and CidAB proteins may affect the proton motive force of the membrane. May be involved in programmed cell death (PCD), possibly triggering PCD in response to antibiotics and environmental stresses. This Staphylococcus aureus (strain JH1) protein is Antiholin-like protein LrgA.